We begin with the raw amino-acid sequence, 373 residues long: Chaperone protein DnaJ (373 aa).

The 66-residue stretch at 5–70 folds into the J domain; that stretch reads DYYEVLGLQK…EKKSNYDQFG (66 aa). Residues 132–214 form a CR-type zinc finger; sequence GVEKEITVNR…CRGNGNVRKT (83 aa). Cys-145, Cys-148, Cys-162, Cys-165, Cys-188, Cys-191, Cys-202, and Cys-205 together coordinate Zn(2+). CXXCXGXG motif repeat units lie at residues 145-152, 162-169, 188-195, and 202-209; these read CEHCNGSG, CPTCSGTG, CDRCSGTG, and CTHCRGNG.

This sequence belongs to the DnaJ family. In terms of assembly, homodimer. Zn(2+) is required as a cofactor.

It is found in the cytoplasm. Functionally, participates actively in the response to hyperosmotic and heat shock by preventing the aggregation of stress-denatured proteins and by disaggregating proteins, also in an autonomous, DnaK-independent fashion. Unfolded proteins bind initially to DnaJ; upon interaction with the DnaJ-bound protein, DnaK hydrolyzes its bound ATP, resulting in the formation of a stable complex. GrpE releases ADP from DnaK; ATP binding to DnaK triggers the release of the substrate protein, thus completing the reaction cycle. Several rounds of ATP-dependent interactions between DnaJ, DnaK and GrpE are required for fully efficient folding. Also involved, together with DnaK and GrpE, in the DNA replication of plasmids through activation of initiation proteins. The chain is Chaperone protein DnaJ from Clostridium botulinum (strain Eklund 17B / Type B).